The primary structure comprises 547 residues: CTP synthase (547 aa).

The interval Met1 to Leu267 is amidoligase domain. A CTP-binding site is contributed by Ser13. Ser13 provides a ligand contact to UTP. ATP is bound by residues Ser14–Ile19 and Asp71. Asp71 and Glu141 together coordinate Mg(2+). CTP is bound by residues Asp148–Glu150, Lys188–Gln193, and Lys224. UTP contacts are provided by residues Lys188–Gln193 and Lys224. One can recognise a Glutamine amidotransferase type-1 domain in the interval Glu292–Thr534. L-glutamine is bound at residue Gly354. Cys381 functions as the Nucleophile; for glutamine hydrolysis in the catalytic mechanism. L-glutamine is bound by residues Leu382–Gln385, Glu405, and Arg462. Active-site residues include His507 and Glu509.

This sequence belongs to the CTP synthase family. In terms of assembly, homotetramer.

The catalysed reaction is UTP + L-glutamine + ATP + H2O = CTP + L-glutamate + ADP + phosphate + 2 H(+). The enzyme catalyses L-glutamine + H2O = L-glutamate + NH4(+). It catalyses the reaction UTP + NH4(+) + ATP = CTP + ADP + phosphate + 2 H(+). It functions in the pathway pyrimidine metabolism; CTP biosynthesis via de novo pathway; CTP from UDP: step 2/2. Its activity is regulated as follows. Allosterically activated by GTP, when glutamine is the substrate; GTP has no effect on the reaction when ammonia is the substrate. The allosteric effector GTP functions by stabilizing the protein conformation that binds the tetrahedral intermediate(s) formed during glutamine hydrolysis. Inhibited by the product CTP, via allosteric rather than competitive inhibition. Its function is as follows. Catalyzes the ATP-dependent amination of UTP to CTP with either L-glutamine or ammonia as the source of nitrogen. Regulates intracellular CTP levels through interactions with the four ribonucleotide triphosphates. The sequence is that of CTP synthase from Rippkaea orientalis (strain PCC 8801 / RF-1) (Cyanothece sp. (strain PCC 8801)).